The chain runs to 216 residues: Vascular endothelial growth factor A (216 aa).

The first 26 residues, 1–26 (MNFLLTWIHWGLAALLYFHNAKVLQA), serve as a signal peptide directing secretion. Intrachain disulfides connect Cys-52–Cys-94, Cys-83–Cys-128, and Cys-87–Cys-130. A glycan (N-linked (GlcNAc...) asparagine) is linked at Asn-101. The disordered stretch occupies residues 140–161 (QEKKSKREKGKGQKRKRKRGRY). Over residues 145-161 (KREKGKGQKRKRKRGRY) the composition is skewed to basic residues.

Belongs to the PDGF/VEGF growth factor family. In terms of assembly, homodimer; disulfide-linked. Also found as heterodimer with PGF. Interacts to the FLT1/VEGFR1 and KDR/VEGFR2 receptors, heparan sulfate and heparin. In terms of tissue distribution, expressed in venom gland, heart, brain, liver, skeletal muscle and kidney.

The protein localises to the secreted. In terms of biological role, growth factor active in angiogenesis, vasculogenesis and endothelial cell growth. Induces endothelial cell proliferation, promotes cell migration, inhibits apoptosis and induces permeabilization of blood vessels. This chain is Vascular endothelial growth factor A, found in Protobothrops flavoviridis (Habu).